The following is a 203-amino-acid chain: MKLFKKLGILLLITSLILLAACKNSEESSSSSEDTNNATDTNTSESQDISVNGPEKVGDVYEIDGGTAKVMAISNKETTVKTGPIQFTVKKVIAAVANEQLPFIDVQIESENTSDEVVRFRPSLAQLATSTGVQIDEPSLLESDRLLDEYVGKVNDSGSIIYVFDNEEDIKDLESIRLRISSPFNEDLKNLGDKLDLKINLEH.

A signal peptide spans 1–21; that stretch reads MKLFKKLGILLLITSLILLAA. Cys22 is lipidated: N-palmitoyl cysteine. Residue Cys22 is the site of S-diacylglycerol cysteine attachment. A compositionally biased stretch (low complexity) spans 27–46; sequence ESSSSSEDTNNATDTNTSES. Residues 27-57 are disordered; it reads ESSSSSEDTNNATDTNTSESQDISVNGPEKV.

The protein resides in the cell membrane. This chain is SPbeta prophage-derived uncharacterized lipoprotein YonS (yonS), found in Bacillus subtilis (strain 168).